A 537-amino-acid chain; its full sequence is Lysine--tRNA ligase (537 aa).

The 'HIGH' region signature appears at 30-38; it reads PSGNIHIGN. Residues 276-280 carry the 'KMSKS' region motif; that stretch reads AMSSS.

The protein belongs to the class-I aminoacyl-tRNA synthetase family.

The protein resides in the cytoplasm. The enzyme catalyses tRNA(Lys) + L-lysine + ATP = L-lysyl-tRNA(Lys) + AMP + diphosphate. In Methanosarcina barkeri, this protein is Lysine--tRNA ligase.